A 158-amino-acid polypeptide reads, in one-letter code: SsrA-binding protein (158 aa).

Positions 131-158 are disordered; sequence KQLHDKRQTEKERDWNKQKQRILQTNQR. A compositionally biased stretch (basic and acidic residues) spans 132–147; the sequence is QLHDKRQTEKERDWNK.

The protein belongs to the SmpB family.

Its subcellular location is the cytoplasm. Its function is as follows. Required for rescue of stalled ribosomes mediated by trans-translation. Binds to transfer-messenger RNA (tmRNA), required for stable association of tmRNA with ribosomes. tmRNA and SmpB together mimic tRNA shape, replacing the anticodon stem-loop with SmpB. tmRNA is encoded by the ssrA gene; the 2 termini fold to resemble tRNA(Ala) and it encodes a 'tag peptide', a short internal open reading frame. During trans-translation Ala-aminoacylated tmRNA acts like a tRNA, entering the A-site of stalled ribosomes, displacing the stalled mRNA. The ribosome then switches to translate the ORF on the tmRNA; the nascent peptide is terminated with the 'tag peptide' encoded by the tmRNA and targeted for degradation. The ribosome is freed to recommence translation, which seems to be the essential function of trans-translation. The protein is SsrA-binding protein of Teredinibacter turnerae (strain ATCC 39867 / T7901).